The primary structure comprises 397 residues: Tryptophan synthase beta chain (397 aa).

An N6-(pyridoxal phosphate)lysine modification is found at Lys-88.

Belongs to the TrpB family. As to quaternary structure, tetramer of two alpha and two beta chains. Requires pyridoxal 5'-phosphate as cofactor.

It carries out the reaction (1S,2R)-1-C-(indol-3-yl)glycerol 3-phosphate + L-serine = D-glyceraldehyde 3-phosphate + L-tryptophan + H2O. It participates in amino-acid biosynthesis; L-tryptophan biosynthesis; L-tryptophan from chorismate: step 5/5. Its function is as follows. The beta subunit is responsible for the synthesis of L-tryptophan from indole and L-serine. The polypeptide is Tryptophan synthase beta chain (trpB) (Haemophilus influenzae (strain ATCC 51907 / DSM 11121 / KW20 / Rd)).